A 258-amino-acid chain; its full sequence is DNA repair protein RecO (258 aa).

This sequence belongs to the RecO family.

In terms of biological role, involved in DNA repair and RecF pathway recombination. The chain is DNA repair protein RecO from Desulfatibacillum aliphaticivorans.